Here is a 281-residue protein sequence, read N- to C-terminus: Light-independent protochlorophyllide reductase iron-sulfur ATP-binding protein (281 aa).

ATP-binding positions include 10–15 and Lys39; that span reads GIGKST. Ser14 provides a ligand contact to Mg(2+). Cys95 and Cys129 together coordinate [4Fe-4S] cluster. Residue 180–181 participates in ATP binding; it reads NR.

This sequence belongs to the NifH/BchL/ChlL family. As to quaternary structure, homodimer. Protochlorophyllide reductase is composed of three subunits; ChlL, ChlN and ChlB. The cofactor is [4Fe-4S] cluster.

The enzyme catalyses chlorophyllide a + oxidized 2[4Fe-4S]-[ferredoxin] + 2 ADP + 2 phosphate = protochlorophyllide a + reduced 2[4Fe-4S]-[ferredoxin] + 2 ATP + 2 H2O. The protein operates within porphyrin-containing compound metabolism; chlorophyll biosynthesis (light-independent). Functionally, component of the dark-operative protochlorophyllide reductase (DPOR) that uses Mg-ATP and reduced ferredoxin to reduce ring D of protochlorophyllide (Pchlide) to form chlorophyllide a (Chlide). This reaction is light-independent. The L component serves as a unique electron donor to the NB-component of the complex, and binds Mg-ATP. The protein is Light-independent protochlorophyllide reductase iron-sulfur ATP-binding protein of Thermosynechococcus vestitus (strain NIES-2133 / IAM M-273 / BP-1).